We begin with the raw amino-acid sequence, 1036 residues long: PDZ domain-containing RING finger protein 4 (1036 aa).

An RING-type; degenerate zinc finger spans residues Cys18–Cys56. Residues Ala129–Pro160 show a composition bias toward gly residues. Residues Ala129–Gly161 form a disordered region. PDZ domains lie at Thr224 to Thr314 and Glu402 to Pro486. A disordered region spans residues His515–Gln590. Positions Asn548–Glu566 are enriched in basic and acidic residues. Positions Asn655–Leu689 form a coiled coil. Basic and acidic residues predominate over residues Glu726–Ser735. The tract at residues Glu726–Gln819 is disordered. Positions Ser736 to Leu750 are enriched in polar residues. A compositionally biased stretch (low complexity) spans Ser774 to Glu799. Basic and acidic residues predominate over residues Glu805 to Gln819.

The sequence is that of PDZ domain-containing RING finger protein 4 (PDZRN4) from Homo sapiens (Human).